A 330-amino-acid polypeptide reads, in one-letter code: Laforin (330 aa).

The region spanning 1-123 (MLFRFGVVVP…DNLVDGVYCL (123 aa)) is the CBM20 domain. Ser25 bears the Phosphoserine; by AMPK mark. Substrate is bound by residues Trp32, Lys86, 102–106 (GPHHD), Asp196, Asp234, and Arg240. The 168-residue stretch at 155-322 (HYSRILPNIW…QQDFSQKFGK (168 aa)) folds into the Tyrosine-protein phosphatase domain. The active-site Phosphocysteine intermediate is Cys265. The short motif at 265-271 (CNAGVGR) is the Glucan phosphatase signature motif CXAGXGR element. Substrate contacts are provided by residues 266 to 271 (NAGVGR) and Tyr303.

Belongs to the protein-tyrosine phosphatase family. In terms of assembly, homodimer. Interacts with PPP1R3B, PPP1R3C, HIRIP5, and EPM2AIP1. Binds glycogen and Lafora bodies. Interacts with NHLRC1/malin (via the NHL repeats). Forms a complex with NHLRC1/malin and HSP70. Interacts with PPP1R3D; in the presence of NHLC1/malin the interaction leads to ubiquitination and autophagic degradation of PPP1R3D. Interacts (via the phosphatase domain) with MAPT/Tau; the interaction dephosphorylates MAPT. Interacts with PRDM8. In terms of processing, polyubiquitinated by NHLRC1/malin. Post-translationally, phosphorylation on Ser-25 by AMPK affects the phosphatase activity of the enzyme and its ability to homodimerize and interact with NHLRC1, PPP1R3C or PRKAA2. As to expression, detected in skeletal muscle and in brain (at protein level). Widely expressed. Higher levels of expression are found in heart, brain, liver, skeletal muscle and kidney.

It localises to the cytoplasm. The protein localises to the endoplasmic reticulum membrane. The protein resides in the cell membrane. The catalysed reaction is O-phospho-L-tyrosyl-[protein] + H2O = L-tyrosyl-[protein] + phosphate. It catalyses the reaction O-phospho-L-seryl-[protein] + H2O = L-seryl-[protein] + phosphate. The enzyme catalyses O-phospho-L-threonyl-[protein] + H2O = L-threonyl-[protein] + phosphate. Functionally, plays an important role in preventing glycogen hyperphosphorylation and the formation of insoluble aggregates, via its activity as glycogen phosphatase, and by promoting the ubiquitination of proteins involved in glycogen metabolism via its interaction with the E3 ubiquitin ligase NHLRC1/malin. Dephosphorylates phosphotyrosine and synthetic substrates, such as para-nitrophenylphosphate (pNPP), and has low activity with phosphoserine and phosphothreonine substrates (in vitro). Has also been shown to dephosphorylate MAPT. Shows strong phosphatase activity towards complex carbohydrates in vitro, avoiding glycogen hyperphosphorylation which is associated with reduced branching and formation of insoluble aggregates. Forms a complex with NHLRC1/malin and HSP70, which suppresses the cellular toxicity of misfolded proteins by promoting their degradation through the ubiquitin-proteasome system (UPS). Acts as a scaffold protein to facilitate PPP1R3C/PTG ubiquitination by NHLRC1/malin. Also promotes proteasome-independent protein degradation through the macroautophagy pathway. In Mus musculus (Mouse), this protein is Laforin (Epm2a).